The sequence spans 206 residues: 2,3-bisphosphoglycerate-dependent phosphoglycerate mutase (206 aa).

Residues 9-16 (RHGQSEWN), 22-23 (TG), Arg61, 88-91 (ERDY), Lys99, 115-116 (RR), and 159-160 (GN) contribute to the substrate site. The active-site Tele-phosphohistidine intermediate is His10. Glu88 (proton donor/acceptor) is an active-site residue.

It belongs to the phosphoglycerate mutase family. BPG-dependent PGAM subfamily. As to quaternary structure, homodimer.

The enzyme catalyses (2R)-2-phosphoglycerate = (2R)-3-phosphoglycerate. It participates in carbohydrate degradation; glycolysis; pyruvate from D-glyceraldehyde 3-phosphate: step 3/5. In terms of biological role, catalyzes the interconversion of 2-phosphoglycerate and 3-phosphoglycerate. The chain is 2,3-bisphosphoglycerate-dependent phosphoglycerate mutase from Brucella abortus (strain S19).